Consider the following 101-residue polypeptide: Large ribosomal subunit protein bL21 (101 aa).

This sequence belongs to the bacterial ribosomal protein bL21 family. As to quaternary structure, part of the 50S ribosomal subunit. Contacts protein L20.

Functionally, this protein binds to 23S rRNA in the presence of protein L20. In Micrococcus luteus (strain ATCC 4698 / DSM 20030 / JCM 1464 / CCM 169 / CCUG 5858 / IAM 1056 / NBRC 3333 / NCIMB 9278 / NCTC 2665 / VKM Ac-2230) (Micrococcus lysodeikticus), this protein is Large ribosomal subunit protein bL21.